Here is a 502-residue protein sequence, read N- to C-terminus: Maturase K (502 aa).

This sequence belongs to the intron maturase 2 family. MatK subfamily.

The protein localises to the plastid. Its subcellular location is the chloroplast. In terms of biological role, usually encoded in the trnK tRNA gene intron. Probably assists in splicing its own and other chloroplast group II introns. The protein is Maturase K of Ipomoea purpurea (Common morning glory).